A 353-amino-acid chain; its full sequence is Guanine nucleotide-binding protein alpha-3 subunit (353 aa).

G2 is lipidated: N-myristoyl glycine. C4 is lipidated: S-palmitoyl cysteine. In terms of domain architecture, G-alpha spans 32–353 (KVVKLLLLGA…IQANLQGCGL (322 aa)). The interval 35 to 48 (KLLLLGAGECGKST) is G1 motif. Residues 40–47 (GAGECGKS), 176–182 (LLSRIKT), 201–205 (DVGGQ), 270–273 (NKKD), and A326 contribute to the GTP site. Mg(2+) contacts are provided by S47 and T182. Residues 174-182 (DILLSRIKT) are G2 motif. Residues 197-206 (FRVFDVGGQR) form a G3 motif region. Residues 266-273 (ILFLNKKD) form a G4 motif region. Positions 324-329 (TCATDT) are G5 motif.

It belongs to the G-alpha family. G(q) subfamily. As to quaternary structure, g proteins are composed of 3 units; alpha, beta and gamma. The alpha chain contains the guanine nucleotide binding site.

Its function is as follows. Guanine nucleotide-binding proteins (G proteins) are involved as modulators or transducers in various transmembrane signaling systems. Promotes transcription of 3',5'-cyclic phosphodiesterases pde-1 and pde-5, leading to reduced cGMP levels in sensory neurons. This causes suppression of insulin production and signaling which leads to increased daf-16 activity and contributes to increased adult lifespan and resistance to oxidative stress. In addition, by reducing cGMP levels, inhibits TGF-beta signaling pathways. Involved in behavioral response to P.aeruginosa by controlling the expression of daf-7, a member of the TGF-beta family, in ASJ sensory neurons. Plays a role in the avoidance response to the noxious chemical quinine in ASH sensory neurons. The protein is Guanine nucleotide-binding protein alpha-3 subunit of Caenorhabditis elegans.